Reading from the N-terminus, the 159-residue chain is U-actitoxin-Avd13a/b (159 aa).

Residues 1 to 18 (MKSIFLVFFAVCLVKAEA) form the signal peptide. Residues 19–26 (GKGRKREP) constitute a propeptide that is removed on maturation. Intrachain disulfides connect cysteine 33/cysteine 45 and cysteine 36/cysteine 52. Positions 59 to 60 (EP) are excised as a propeptide. 2 disulfides stabilise this stretch: cysteine 67–cysteine 79 and cysteine 70–cysteine 86. Residues 93-94 (EP) constitute a propeptide that is removed on maturation. 2 disulfide bridges follow: cysteine 101–cysteine 113 and cysteine 104–cysteine 120. Residues 127-128 (EP) constitute a propeptide that is removed on maturation. Disulfide bonds link cysteine 135-cysteine 147 and cysteine 138-cysteine 154.

The protein belongs to the sea anemone BBH family.

It is found in the secreted. It localises to the nematocyst. Its function is as follows. Inhibits ion channels. This chain is U-actitoxin-Avd13a/b, found in Anemonia viridis (Snakelocks anemone).